The chain runs to 873 residues: Leucine--tRNA ligase (873 aa).

The 'HIGH' region motif lies at 47–57; it reads PYPSGKLHMGH. The 'KMSKS' region motif lies at 636 to 640; sequence KMSKS. Lys-639 serves as a coordination point for ATP.

Belongs to the class-I aminoacyl-tRNA synthetase family.

It is found in the cytoplasm. The enzyme catalyses tRNA(Leu) + L-leucine + ATP = L-leucyl-tRNA(Leu) + AMP + diphosphate. The sequence is that of Leucine--tRNA ligase from Acinetobacter baylyi (strain ATCC 33305 / BD413 / ADP1).